Consider the following 393-residue polypeptide: NAD(P)H-quinone oxidoreductase subunit H, chloroplastic (393 aa).

This sequence belongs to the complex I 49 kDa subunit family. NDH is composed of at least 16 different subunits, 5 of which are encoded in the nucleus.

The protein resides in the plastid. The protein localises to the chloroplast thylakoid membrane. It carries out the reaction a plastoquinone + NADH + (n+1) H(+)(in) = a plastoquinol + NAD(+) + n H(+)(out). It catalyses the reaction a plastoquinone + NADPH + (n+1) H(+)(in) = a plastoquinol + NADP(+) + n H(+)(out). Its function is as follows. NDH shuttles electrons from NAD(P)H:plastoquinone, via FMN and iron-sulfur (Fe-S) centers, to quinones in the photosynthetic chain and possibly in a chloroplast respiratory chain. The immediate electron acceptor for the enzyme in this species is believed to be plastoquinone. Couples the redox reaction to proton translocation, and thus conserves the redox energy in a proton gradient. This chain is NAD(P)H-quinone oxidoreductase subunit H, chloroplastic, found in Platanus occidentalis (Sycamore).